The sequence spans 97 residues: Aspartyl/glutamyl-tRNA(Asn/Gln) amidotransferase subunit C (97 aa).

A disordered region spans residues 59–78; sequence STGKLRPDEPAQPLSRDDAL. Over residues 63 to 78 the composition is skewed to basic and acidic residues; that stretch reads LRPDEPAQPLSRDDAL.

The protein belongs to the GatC family. As to quaternary structure, heterotrimer of A, B and C subunits.

The enzyme catalyses L-glutamyl-tRNA(Gln) + L-glutamine + ATP + H2O = L-glutaminyl-tRNA(Gln) + L-glutamate + ADP + phosphate + H(+). It carries out the reaction L-aspartyl-tRNA(Asn) + L-glutamine + ATP + H2O = L-asparaginyl-tRNA(Asn) + L-glutamate + ADP + phosphate + 2 H(+). Functionally, allows the formation of correctly charged Asn-tRNA(Asn) or Gln-tRNA(Gln) through the transamidation of misacylated Asp-tRNA(Asn) or Glu-tRNA(Gln) in organisms which lack either or both of asparaginyl-tRNA or glutaminyl-tRNA synthetases. The reaction takes place in the presence of glutamine and ATP through an activated phospho-Asp-tRNA(Asn) or phospho-Glu-tRNA(Gln). In Metallosphaera sedula (strain ATCC 51363 / DSM 5348 / JCM 9185 / NBRC 15509 / TH2), this protein is Aspartyl/glutamyl-tRNA(Asn/Gln) amidotransferase subunit C.